A 470-amino-acid polypeptide reads, in one-letter code: Shutoff alkaline exonuclease (470 aa).

The protein belongs to the herpesviridae alkaline nuclease family. Forms a complex with the DNA polymerase, the DNA polymerase processivity factor, and the major DNA binding protein.

It is found in the host nucleus. The protein localises to the host cytoplasm. Functionally, plays a role in processing non linear or branched viral DNA intermediates in order to promote the production of mature packaged unit-length linear progeny viral DNA molecules. Exhibits endonuclease and exonuclease activities and accepts both double-stranded and single-stranded DNA as substrate. Exonuclease digestion of DNA is in the 5'-&gt; 3' direction and the products are 5'-monophosphate nucleosides. Additionally, forms a recombinase with the major DNA-binding protein, which displays strand exchange activity. Also acts as a cytoplasmic RNA endonuclease that induces degradation of the majority of the cellular messenger RNAs during early lytic infection. The resulting inhibition of cellular protein synthesis serves to ensure maximal viral gene expression and evasion from host immune response. Internally cleaves host mRNAs which are then degraded by the cellular exonuclease XRN1. Bypasses therefore the regulatory steps of deadenylation and decapping normally required for XRN1 activation. The protein is Shutoff alkaline exonuclease of Epstein-Barr virus (strain GD1) (HHV-4).